A 146-amino-acid polypeptide reads, in one-letter code: MTSKPLEHVADIEKSLRHIAAIIKQKGREILNQYAITPPQFVGLQWLYELGDMTIGELSGKMYLACSTTTDLIDRMQKNELVERVKDPADRRVVRIHLLPEGERIIQEVITKRQEYLRDMFESFTDEEIAIFEKSLMKLQHEMKRK.

Residues Val-9–His-141 enclose the HTH marR-type domain. A DNA-binding region (H-T-H motif) is located at residues Ile-55–Lys-78.

This is an uncharacterized protein from Bacillus subtilis (strain 168).